The following is a 385-amino-acid chain: Di-N-acetylchitobiase (385 aa).

The N-terminal stretch at 1 to 38 (MSRPQLRRWRLVSSPPSGVPGLALLALLALLALRLAAG) is a signal peptide. The GH18 domain occupies 39-385 (TDCPCPEPEL…EVLKPKLLQR (347 aa)). Glutamate 143 serves as the catalytic Proton donor. N-linked (GlcNAc...) asparagine glycans are attached at residues asparagine 193, asparagine 228, asparagine 262, and asparagine 299.

This sequence belongs to the glycosyl hydrolase 18 family.

Its subcellular location is the lysosome. Its function is as follows. Involved in the degradation of asparagine-linked glycoproteins. Hydrolyze of N-acetyl-beta-D-glucosamine (1-4)N-acetylglucosamine chitobiose core from the reducing end of the bond, it requires prior cleavage by glycosylasparaginase. The protein is Di-N-acetylchitobiase (CTBS) of Homo sapiens (Human).